Consider the following 473-residue polypeptide: Envelope glycoprotein M (473 aa).

The Intravirion portion of the chain corresponds to 1–32; it reads MGRPAPRGSPDSAPPTKGMTGARTAWWVWCVQ. The helical transmembrane segment at 33–53 threads the bilayer; that stretch reads VATFVVSAVCVTGLLVLASVF. Topologically, residues 54-90 are virion surface; that stretch reads RARFPCFYATASSYAGVNSTAEVRGGVAVPLRLDTQS. Residues 91 to 111 traverse the membrane as a helical segment; it reads LVGTYVITAVLLLAVAVYAVV. Residues 112–137 lie on the Intravirion side of the membrane; the sequence is GAVTSRYDRALDAGRRLAAARMAMPH. Residues 138–158 traverse the membrane as a helical segment; sequence ATLIAGNVCSWLLQITVLLLA. The Virion surface portion of the chain corresponds to 159–163; the sequence is HRISQ. A helical membrane pass occupies residues 164 to 184; it reads LAHLVYVLHFACLVYFAAHFC. At 185 to 216 the chain is on the intravirion side; the sequence is TRGVLSGTYLRQVHGLMELAPTHHRVVGPARA. A helical transmembrane segment spans residues 217-237; it reads VLTNALLLGVFLCTADAAVSL. At 238–250 the chain is on the virion surface side; that stretch reads NTIAAFNFNFSAP. Residues 251 to 271 form a helical membrane-spanning segment; sequence GMLICLTVLFAILVVSLLLVV. The Intravirion segment spans residues 272-280; the sequence is EGVLCHYVR. The chain crosses the membrane as a helical span at residues 281-301; the sequence is VLVGPHLGAVAATGIVGLACE. At 302–318 the chain is on the virion surface side; it reads HYYTNGYYVVETQWPGA. The chain crosses the membrane as a helical span at residues 319–339; the sequence is QTGVRVALALVAAFALGMAVL. Residues 340-473 lie on the Intravirion side of the membrane; it reads RCTRAYLYHR…DPVYSTVRRW (134 aa). 2 disordered regions span residues 371–399 and 440–473; these read KRVR…PEYA and HPRH…VRRW.

Belongs to the herpesviridae glycoprotein M family. As to quaternary structure, interacts (via N-terminus) with gN (via N-terminus). The gM-gN heterodimer forms the gCII complex.

The protein resides in the virion membrane. The protein localises to the host Golgi apparatus. Its subcellular location is the host trans-Golgi network. It localises to the host endosome membrane. It is found in the host nucleus inner membrane. In terms of biological role, envelope glycoprotein important for virion assembly and egress. Plays a role in the correct incorporation of gH-gL into virion membrane. Directs the glycoprotein N (gN) to the host trans-Golgi network. The sequence is that of Envelope glycoprotein M from Human herpesvirus 1 (strain 17) (HHV-1).